Consider the following 201-residue polypeptide: Probable GTP-binding protein EngB (201 aa).

Residues 25 to 199 (HGIEIAFIGY…KSKLNFWYEK (175 aa)) form the EngB-type G domain. GTP-binding positions include 33-40 (GYSNSGKS), 60-64 (GRTQL), 78-81 (DLPG), 145-148 (TKCD), and 178-180 (FSS). Mg(2+)-binding residues include S40 and T62.

The protein belongs to the TRAFAC class TrmE-Era-EngA-EngB-Septin-like GTPase superfamily. EngB GTPase family. Requires Mg(2+) as cofactor.

Functionally, necessary for normal cell division and for the maintenance of normal septation. The chain is Probable GTP-binding protein EngB from Buchnera aphidicola subsp. Schizaphis graminum (strain Sg).